Reading from the N-terminus, the 309-residue chain is GTP cyclohydrolase MptA 2 (309 aa).

The protein belongs to the GTP cyclohydrolase IV family. As to quaternary structure, homodimer. The cofactor is Fe(2+).

The enzyme catalyses GTP + H2O = 7,8-dihydroneopterin 2',3'-cyclic phosphate + formate + diphosphate + H(+). It functions in the pathway cofactor biosynthesis; 5,6,7,8-tetrahydromethanopterin biosynthesis. Functionally, converts GTP to 7,8-dihydro-D-neopterin 2',3'-cyclic phosphate, the first intermediate in the biosynthesis of coenzyme methanopterin. This chain is GTP cyclohydrolase MptA 2, found in Methanocella arvoryzae (strain DSM 22066 / NBRC 105507 / MRE50).